A 780-amino-acid polypeptide reads, in one-letter code: MVNRDAYNELNLNKKSQETNRKPSPLSSYTSISRELDYANQSPFSSNSFSPTELKARTSATFDVRSASTSPINASDFHKYSHDPFQRLFKAKGNASFSKTKSFPSSVTYSPSEETFPLTSGMNKSVHEYPFTLSESAISSSHKSSIPERRNFDSSVSVSNPLLHWNNVDTLLRDGSLENVNNSRQDQFLPYKTFSSTISNSDFLHRESSFSSLIDEESKLASLRNLNINDRPPLPVLKNSERNLLHRQLLSNHPFFSQNNVSLSTNSKNYSTDFTKIQSDSSLLQNRQQNHRIETDQLSHFPDHLDPSRIPSPYQPSSLQPLESRKLHSKVDVHSKKLNALSQLNPILRSENVLQNDNHHSSLSMDNDPTNVSTKNRNNQTVGEHPYVDDNKKKKKGPAKPKEKATLGKTVNSFFGSHSTSNYSKVPLSAKLTGEKSDDLSNLLKNKGKKKSQDNQIPHLVGFLGHLSTICKDQYGCRYLQKLLDENPKVNASLFFPEIRQSVVQLMIDPFGNYMCQKLFVYASREQKLSMLNGIGEGIVDICSNLYGTRSMQNIIDKLTSNEQISLLLKIIIPSLTTLACDNNGTHVLQKCIAKFPPEKLEPLFLSMEENLITLATNRHGCCILQRCLDRTNGDIQERLVNSIIKSCLLLVQNAYGNYLVQHVLELNIQPYTERIIEKFFGNICKLSLQKFSSNAIEQCIRTASPSTREQMLQEFLSFPNIEQLLDDCYANYVMQRFLNVADESQKFLILRSISHVIPKIQNTRHGRHILAKLTSSTSS.

Disordered regions lie at residues 1 to 29 (MVNR…LSSY), 298 to 330 (LSHF…LHSK), and 358 to 411 (NHHS…GKTV). The span at 298 to 307 (LSHFPDHLDP) shows a compositional bias: basic and acidic residues. Low complexity predominate over residues 311 to 322 (PSPYQPSSLQPL). Polar residues predominate over residues 358–382 (NHHSSLSMDNDPTNVSTKNRNNQTV). Residues 435-778 (EKSDDLSNLL…HILAKLTSST (344 aa)) enclose the PUM-HD domain. 9 Pumilio repeats span residues 462 to 497 (GFLG…LFFP), 498 to 533 (EIRQ…SMLN), 534 to 569 (GIGE…SLLL), 570 to 606 (KIII…PLFL), 607 to 642 (SMEE…RLVN), 643 to 678 (SIIK…RIIE), 679 to 714 (KFFG…QMLQ), 715 to 752 (EFLS…LILR), and 753 to 780 (SISH…STSS).

The chain is Pumilio domain-containing protein C4G8.03c from Schizosaccharomyces pombe (strain 972 / ATCC 24843) (Fission yeast).